Here is a 195-residue protein sequence, read N- to C-terminus: Protein GrpE (195 aa).

Residues 1–20 (MSSKEQKTPDEQVLDQKEAA) show a composition bias toward basic and acidic residues. Positions 1–40 (MSSKEQKTPDEQVLDQKEAAKGQQADAAPETADVADPRDA) are disordered.

Belongs to the GrpE family. Homodimer.

It localises to the cytoplasm. Its function is as follows. Participates actively in the response to hyperosmotic and heat shock by preventing the aggregation of stress-denatured proteins, in association with DnaK and GrpE. It is the nucleotide exchange factor for DnaK and may function as a thermosensor. Unfolded proteins bind initially to DnaJ; upon interaction with the DnaJ-bound protein, DnaK hydrolyzes its bound ATP, resulting in the formation of a stable complex. GrpE releases ADP from DnaK; ATP binding to DnaK triggers the release of the substrate protein, thus completing the reaction cycle. Several rounds of ATP-dependent interactions between DnaJ, DnaK and GrpE are required for fully efficient folding. This Pectobacterium carotovorum subsp. carotovorum (strain PC1) protein is Protein GrpE.